The following is a 413-amino-acid chain: 3-oxoacyl-[acyl-carrier-protein] synthase 2 (413 aa).

The 410-residue stretch at 3–412 folds into the Ketosynthase family 3 (KS3) domain; sequence KRRVVVTGLG…GTNGSLIFKK (410 aa). Active-site for beta-ketoacyl synthase activity residues include cysteine 164, histidine 304, and histidine 341.

It belongs to the thiolase-like superfamily. Beta-ketoacyl-ACP synthases family. As to quaternary structure, homodimer.

The catalysed reaction is a fatty acyl-[ACP] + malonyl-[ACP] + H(+) = a 3-oxoacyl-[ACP] + holo-[ACP] + CO2. It carries out the reaction (9Z)-hexadecenoyl-[ACP] + malonyl-[ACP] + H(+) = 3-oxo-(11Z)-octadecenoyl-[ACP] + holo-[ACP] + CO2. Its pathway is lipid metabolism; fatty acid biosynthesis. In terms of biological role, involved in the type II fatty acid elongation cycle. Catalyzes the elongation of a wide range of acyl-ACP by the addition of two carbons from malonyl-ACP to an acyl acceptor. Can efficiently catalyze the conversion of palmitoleoyl-ACP (cis-hexadec-9-enoyl-ACP) to cis-vaccenoyl-ACP (cis-octadec-11-enoyl-ACP), an essential step in the thermal regulation of fatty acid composition. This chain is 3-oxoacyl-[acyl-carrier-protein] synthase 2 (fabF), found in Escherichia coli O157:H7.